Reading from the N-terminus, the 356-residue chain is DNA polymerase IV (356 aa).

Residues 6-187 (IIHIDMDAFY…QPIRRLHGVG (182 aa)) enclose the UmuC domain. 2 residues coordinate Mg(2+): D10 and D105. E106 is a catalytic residue.

It belongs to the DNA polymerase type-Y family. In terms of assembly, monomer. Requires Mg(2+) as cofactor.

Its subcellular location is the cytoplasm. It carries out the reaction DNA(n) + a 2'-deoxyribonucleoside 5'-triphosphate = DNA(n+1) + diphosphate. In terms of biological role, poorly processive, error-prone DNA polymerase involved in untargeted mutagenesis. Copies undamaged DNA at stalled replication forks, which arise in vivo from mismatched or misaligned primer ends. These misaligned primers can be extended by PolIV. Exhibits no 3'-5' exonuclease (proofreading) activity. May be involved in translesional synthesis, in conjunction with the beta clamp from PolIII. This Halorhodospira halophila (strain DSM 244 / SL1) (Ectothiorhodospira halophila (strain DSM 244 / SL1)) protein is DNA polymerase IV.